The following is a 242-amino-acid chain: Pyridoxine 5'-phosphate synthase (242 aa).

Position 6 (Asn-6) interacts with 3-amino-2-oxopropyl phosphate. Position 8–9 (8–9 (DH)) interacts with 1-deoxy-D-xylulose 5-phosphate. Residue Arg-17 coordinates 3-amino-2-oxopropyl phosphate. His-42 (proton acceptor) is an active-site residue. 1-deoxy-D-xylulose 5-phosphate contacts are provided by Arg-44 and His-49. The Proton acceptor role is filled by Glu-69. 1-deoxy-D-xylulose 5-phosphate is bound at residue Thr-99. His-190 serves as the catalytic Proton donor. 3-amino-2-oxopropyl phosphate is bound by residues Gly-191 and 212-213 (GH).

This sequence belongs to the PNP synthase family. Homooctamer; tetramer of dimers.

It is found in the cytoplasm. It carries out the reaction 3-amino-2-oxopropyl phosphate + 1-deoxy-D-xylulose 5-phosphate = pyridoxine 5'-phosphate + phosphate + 2 H2O + H(+). It functions in the pathway cofactor biosynthesis; pyridoxine 5'-phosphate biosynthesis; pyridoxine 5'-phosphate from D-erythrose 4-phosphate: step 5/5. Catalyzes the complicated ring closure reaction between the two acyclic compounds 1-deoxy-D-xylulose-5-phosphate (DXP) and 3-amino-2-oxopropyl phosphate (1-amino-acetone-3-phosphate or AAP) to form pyridoxine 5'-phosphate (PNP) and inorganic phosphate. In Neisseria meningitidis serogroup C, this protein is Pyridoxine 5'-phosphate synthase.